Here is a 179-residue protein sequence, read N- to C-terminus: Ribosome maturation factor RimM (179 aa).

Residues 102-179 (DGEYYWYQLE…EMKVDWDADF (78 aa)) form the PRC barrel domain.

Belongs to the RimM family. Binds ribosomal protein uS19.

It localises to the cytoplasm. Functionally, an accessory protein needed during the final step in the assembly of 30S ribosomal subunit, possibly for assembly of the head region. Essential for efficient processing of 16S rRNA. May be needed both before and after RbfA during the maturation of 16S rRNA. It has affinity for free ribosomal 30S subunits but not for 70S ribosomes. In Pseudomonas syringae pv. syringae (strain B728a), this protein is Ribosome maturation factor RimM.